Reading from the N-terminus, the 296-residue chain is N-acetylmuramic acid 6-phosphate etherase (296 aa).

The region spanning 54 to 217 (VISCFQKGGR…STASMVGIGK (164 aa)) is the SIS domain. Glu82 acts as the Proton donor in catalysis. Glu113 is a catalytic residue.

This sequence belongs to the GCKR-like family. MurNAc-6-P etherase subfamily. Homodimer.

The catalysed reaction is N-acetyl-D-muramate 6-phosphate + H2O = N-acetyl-D-glucosamine 6-phosphate + (R)-lactate. It participates in amino-sugar metabolism; N-acetylmuramate degradation. In terms of biological role, specifically catalyzes the cleavage of the D-lactyl ether substituent of MurNAc 6-phosphate, producing GlcNAc 6-phosphate and D-lactate. This Listeria monocytogenes serotype 4b (strain CLIP80459) protein is N-acetylmuramic acid 6-phosphate etherase.